A 525-amino-acid chain; its full sequence is Alpha-ketoglutaric semialdehyde dehydrogenase 2 (525 aa).

Residues lysine 185, glutamate 188, and 242 to 247 (GSRQGG) contribute to the NAD(+) site. Glutamate 266 functions as the Proton acceptor in the catalytic mechanism. Catalysis depends on cysteine 303, which acts as the Nucleophile. An NAD(+)-binding site is contributed by glutamate 394.

Belongs to the aldehyde dehydrogenase family. Homodimer.

It carries out the reaction 2,5-dioxopentanoate + NADP(+) + H2O = 2-oxoglutarate + NADPH + 2 H(+). The catalysed reaction is 2,5-dioxopentanoate + NAD(+) + H2O = 2-oxoglutarate + NADH + 2 H(+). It functions in the pathway carbohydrate acid metabolism; D-glucarate degradation. Its pathway is carbohydrate acid metabolism; galactarate degradation. Functionally, catalyzes the NAD(P)(+)-dependent oxidation of alpha-ketoglutaric semialdehyde (alphaKGSA) to alpha-ketoglutarate. Involved in D-glucarate/D-galactarate metabolism. Prefers NAD(+) to NADP(+) as a cosubstrate. The protein is Alpha-ketoglutaric semialdehyde dehydrogenase 2 of Azospirillum brasilense.